Consider the following 576-residue polypeptide: SNF1-like protein kinase ssp2 (576 aa).

In terms of domain architecture, Protein kinase spans Y34–F285. ATP-binding positions include L40–V48 and K63. D156 (proton acceptor) is an active-site residue. T189 is subject to Phosphothreonine. The tract at residues Y292–I348 is auto-inhibitory domain (AID). Residues A304–N345 enclose the UBA domain. S442 carries the phosphoserine modification.

This sequence belongs to the protein kinase superfamily. CAMK Ser/Thr protein kinase family. SNF1 subfamily. In terms of assembly, component of the AMP-activated protein kinase complex also known as the SNF1 kinase complex (Snf1c), a heterotrimeric complex composed of a catalytic subunit alpha and 2 regulatory subunits beta (amk2) and gamma (cbs2). In terms of processing, phosphorylation at Thr-189 by ssp1 is required for nuclear entry in nutritionally stressed cells.

The protein localises to the cytoplasm. The protein resides in the nucleus. It catalyses the reaction L-seryl-[protein] + ATP = O-phospho-L-seryl-[protein] + ADP + H(+). It carries out the reaction L-threonyl-[protein] + ATP = O-phospho-L-threonyl-[protein] + ADP + H(+). Serine/threonine protein kinase essential for release from glucose repression via the phosphorylation of scr1 upon glucose deprivation. Catalytic subunit of the AMP-activated protein kinase complex also known as the SNF1 kinase complex (Snf1c), a central regulator of cellular energy homeostasis, which, in response to a fall in intracellular ATP levels, activates energy-producing pathways and inhibits energy-consuming processes. The complex phosphorylates histone H3 to form H3S10ph, which promotes H3K14ac formation, leading to transcriptional activation through TBP recruitment to the promoters. Regulates proper cell cycle exit and sexual differentiation. Also regulates ste11 levels under nitrogen deprivation. This Schizosaccharomyces pombe (strain 972 / ATCC 24843) (Fission yeast) protein is SNF1-like protein kinase ssp2.